We begin with the raw amino-acid sequence, 87 residues long: uncharacterized protein (87 aa).

The N-terminal stretch at 1 to 22 (MKIKTTVAALSVLSVLSFGAFA) is a signal peptide.

This sequence belongs to the BhsA/McbA family.

The protein resides in the periplasm. This is an uncharacterized protein from Escherichia coli O6:H1 (strain CFT073 / ATCC 700928 / UPEC).